Here is a 770-residue protein sequence, read N- to C-terminus: Metabotropic glutamate receptor-like protein F (770 aa).

The first 22 residues, 1–22 (MKIKNFIYFLIYFIFLFKVING), serve as a signal peptide directing secretion. Residues 23–370 (QNKTCKISVL…STVDYPESLK (348 aa)) are Extracellular-facing. Asn-24, Asn-185, Asn-260, Asn-286, Asn-319, and Asn-344 each carry an N-linked (GlcNAc...) asparagine glycan. The chain crosses the membrane as a helical span at residues 371–391 (IGVTVVSGFCIFLCLISMIIV). Over 392–405 (IKFKEAKVIKSSSP) the chain is Cytoplasmic. A helical membrane pass occupies residues 406–426 (IFCLLILFGCIVIFVGCIMFA). The Extracellular segment spans residues 427-442 (RSPTDGSCRSRVWLLS). Residues 443-463 (LGYTIFLGNLMVKNWRIWLLF) form a helical membrane-spanning segment. At 464-483 (DNPKLKKRAITNWKLYPWVS) the chain is on the cytoplasmic side. Residues 484–504 (GIVIIDIVILSIWQALGDIVA) form a helical membrane-spanning segment. The Extracellular portion of the chain corresponds to 505 to 528 (ESRTGIDSLTKYEYRNVCASSDQG). A helical membrane pass occupies residues 529–549 (SIALYLLLVFHGLILLVACFI). Over 550-565 (SFKIKVVDIEEFNESK) the chain is Cytoplasmic. The chain crosses the membrane as a helical span at residues 566 to 586 (PITTSVYIITFCLFIVIPIMV). The Extracellular portion of the chain corresponds to 587–594 (SSPTVTTQ). Residues 595 to 615 (TTIICICALITTMLSIILLFG) traverse the membrane as a helical segment. The Cytoplasmic portion of the chain corresponds to 616–770 (TKFFKMITVG…GQTEIDSNDV (155 aa)). The tract at residues 639–740 (SSHSQRTKSS…EEKQKDEEEI (102 aa)) is disordered. 2 stretches are compositionally biased toward basic and acidic residues: residues 676 to 693 (SSEKEKKKPIESNPKDHM) and 730 to 740 (NEEKQKDEEEI). The stretch at 715 to 760 (REQINDNIILENNNDNEEKQKDEEEIKEEKLLVSEIQAKRLSLEQN) forms a coiled coil.

This sequence in the N-terminal section; belongs to the BMP lipoprotein family. The protein in the C-terminal section; belongs to the G-protein coupled receptor 3 family. GABA-B receptor subfamily.

It localises to the membrane. The chain is Metabotropic glutamate receptor-like protein F (grlF) from Dictyostelium discoideum (Social amoeba).